A 610-amino-acid chain; its full sequence is ABC transporter ATP-binding protein ARB1 (610 aa).

A disordered region spans residues 1-43; it reads MPPVSASKAKRDAKKAEREAKKAAAGKTIRKLGRKKEAAAEES. Residues serine 43 and serine 65 each carry the phosphoserine modification. ABC transporter domains lie at 82–323 and 393–610; these read IKLS…TNQM and LAFD…NVVL. Position 114-121 (114-121) interacts with ATP; it reads GENGCGKS. At serine 196 the chain carries Phosphoserine. Residue 428 to 435 participates in ATP binding; the sequence is GPNGVGKS. Threonine 446 bears the Phosphothreonine mark.

Belongs to the ABC transporter superfamily. ABCF family. EF3 subfamily. As to quaternary structure, interacts with LSG1.

It localises to the cytoplasm. It is found in the nucleus. The enzyme catalyses ATP + H2O = ADP + phosphate + H(+). In terms of biological role, ATPase that stimulates 40S and 60S ribosome biogenesis. Also involved in ribosome-associated quality control (RQC) pathway, a pathway that mediates ubiquitination and extraction of incompletely synthesized nascent chains for proteasomal degradation: localizes to the ribosomal E-site and stimulates VMS1-dependent tRNA cleavage. This is ABC transporter ATP-binding protein ARB1 (ARB1) from Saccharomyces cerevisiae (strain ATCC 204508 / S288c) (Baker's yeast).